The chain runs to 352 residues: Photosystem II protein D1 (352 aa).

The residue at position 2 (T2) is an N-acetylthreonine. T2 is subject to Phosphothreonine. 3 helical membrane-spanning segments follow: residues 29-46 (YIGW…TATS), 118-133 (HFLL…EWEL), and 142-156 (WIAV…AASA). H118 is a chlorophyll a binding site. Y126 contacts pheophytin a. [CaMn4O5] cluster is bound by residues D170 and E189. A helical transmembrane segment spans residues 197 to 218 (FHMLGVAGVFGGSLFSAMHGSL). H198 lines the chlorophyll a pocket. A quinone-binding positions include H215 and 264-265 (SF). H215 is a Fe cation binding site. H272 lines the Fe cation pocket. Residues 274-288 (FLAAWPVIGIWFTAL) traverse the membrane as a helical segment. H332, E333, D342, and A344 together coordinate [CaMn4O5] cluster. The propeptide occupies 345–352 (STNSSSNN).

The protein belongs to the reaction center PufL/M/PsbA/D family. In terms of assembly, PSII is composed of 1 copy each of membrane proteins PsbA, PsbB, PsbC, PsbD, PsbE, PsbF, PsbH, PsbI, PsbJ, PsbK, PsbL, PsbM, PsbT, PsbX, PsbY, PsbZ, Psb30/Ycf12, at least 3 peripheral proteins of the oxygen-evolving complex and a large number of cofactors. It forms dimeric complexes. The D1/D2 heterodimer binds P680, chlorophylls that are the primary electron donor of PSII, and subsequent electron acceptors. It shares a non-heme iron and each subunit binds pheophytin, quinone, additional chlorophylls, carotenoids and lipids. D1 provides most of the ligands for the Mn4-Ca-O5 cluster of the oxygen-evolving complex (OEC). There is also a Cl(-1) ion associated with D1 and D2, which is required for oxygen evolution. The PSII complex binds additional chlorophylls, carotenoids and specific lipids. serves as cofactor. In terms of processing, tyr-161 forms a radical intermediate that is referred to as redox-active TyrZ, YZ or Y-Z. C-terminally processed by CTPA; processing is essential to allow assembly of the oxygen-evolving complex and thus photosynthetic growth.

It localises to the plastid. The protein resides in the chloroplast thylakoid membrane. The catalysed reaction is 2 a plastoquinone + 4 hnu + 2 H2O = 2 a plastoquinol + O2. This is one of the two reaction center proteins of photosystem II. Functionally, photosystem II (PSII) is a light-driven water:plastoquinone oxidoreductase that uses light energy to abstract electrons from H(2)O, generating O(2) and a proton gradient subsequently used for ATP formation. It consists of a core antenna complex that captures photons, and an electron transfer chain that converts photonic excitation into a charge separation. The D1/D2 (PsbA/PsbD) reaction center heterodimer binds P680, the primary electron donor of PSII as well as several subsequent electron acceptors. In Chlamydomonas reinhardtii (Chlamydomonas smithii), this protein is Photosystem II protein D1.